The chain runs to 509 residues: Transmembrane protein 102 (509 aa).

The Extracellular segment spans residues 1 to 312 (MASTVWGGAP…VLLATPEPPR (312 aa)). A disordered region spans residues 167 to 236 (PPVPEESDMT…NPETPEPLET (70 aa)). Residues 174-204 (DMTHQTHSKESPTDRENSVDPSHDYVPEPEP) are compositionally biased toward basic and acidic residues. Residues 207 to 224 (SLQKSSSDLSESQSSYKD) are compositionally biased toward low complexity. The helical transmembrane segment at 313-329 (HLLLFDLIPVVTVTGWP) threads the bilayer. Over 330–509 (DTARSHSWAG…GLAGVGGGTH (180 aa)) the chain is Cytoplasmic.

In terms of assembly, interacts with CSF2RB; this interaction occurs preferentially in the absence of CSF2.

The protein resides in the cell membrane. Functionally, selectively involved in CSF2 deprivation-induced apoptosis via a mitochondria-dependent pathway. In Mus musculus (Mouse), this protein is Transmembrane protein 102 (Tmem102).